The following is a 193-amino-acid chain: ATP-dependent Clp protease proteolytic subunit (193 aa).

Ser98 acts as the Nucleophile in catalysis. The active site involves His123.

It belongs to the peptidase S14 family. Fourteen ClpP subunits assemble into 2 heptameric rings which stack back to back to give a disk-like structure with a central cavity, resembling the structure of eukaryotic proteasomes.

It localises to the cytoplasm. It catalyses the reaction Hydrolysis of proteins to small peptides in the presence of ATP and magnesium. alpha-casein is the usual test substrate. In the absence of ATP, only oligopeptides shorter than five residues are hydrolyzed (such as succinyl-Leu-Tyr-|-NHMec, and Leu-Tyr-Leu-|-Tyr-Trp, in which cleavage of the -Tyr-|-Leu- and -Tyr-|-Trp bonds also occurs).. In terms of biological role, cleaves peptides in various proteins in a process that requires ATP hydrolysis. Has a chymotrypsin-like activity. Plays a major role in the degradation of misfolded proteins. This chain is ATP-dependent Clp protease proteolytic subunit, found in Clostridium acetobutylicum (strain ATCC 824 / DSM 792 / JCM 1419 / IAM 19013 / LMG 5710 / NBRC 13948 / NRRL B-527 / VKM B-1787 / 2291 / W).